The following is a 914-amino-acid chain: Serine/threonine kinase SAD-1 (914 aa).

The 252-residue stretch at 47-298 folds into the Protein kinase domain; that stretch reads YKLEKTLGKG…LADVFKHPWV (252 aa). Residues 53-61 and Lys-76 each bind ATP; that span reads LGKGQTGLV. The active-site Proton acceptor is the Asp-169. Disordered regions lie at residues 375–551, 563–590, and 757–914; these read AQED…SPPS, TMNSTNSSTNSLIAGNSQTSIGSTSGPW, and NSTQ…ADKV. Over residues 393-402 the composition is skewed to basic and acidic residues; the sequence is PPKKRTDSSR. Over residues 444–462 the composition is skewed to low complexity; sequence RSSTRDLFGSSSSGSYSAR. The segment covering 473 to 482 has biased composition (polar residues); it reads ASRSTNSYHY. The span at 495–526 shows a compositional bias: basic and acidic residues; that stretch reads AARHVRDAQERRESRDSGRGSSRKESKDRSDK. 2 stretches are compositionally biased toward low complexity: residues 527–551 and 563–573; these read SASSSSCKNDASSTSSVPHKYSPPS and TMNSTNSSTNS. Positions 574-590 are enriched in polar residues; it reads LIAGNSQTSIGSTSGPW. The segment covering 780–796 has biased composition (low complexity); the sequence is DSSVGSACSDSESNASS. The segment covering 823–837 has biased composition (polar residues); the sequence is SMRSVGSGTANSYKS. Residues 850-876 are compositionally biased toward low complexity; the sequence is ASSSSASNRYGPSSSSSGSYSNNADYS. The segment covering 882–903 has biased composition (polar residues); sequence SQRSNGSSAPKNQYSPGSQRSF.

This sequence belongs to the protein kinase superfamily. CAMK Ser/Thr protein kinase family. SNF1 subfamily. As to quaternary structure, interacts with strd-1 and nab-1. Mg(2+) is required as a cofactor. As to expression, expressed in neurons. Colocalizes with strd-1 along the dorsal nerve cord.

It localises to the synapse. The catalysed reaction is L-seryl-[protein] + ATP = O-phospho-L-seryl-[protein] + ADP + H(+). It carries out the reaction L-threonyl-[protein] + ATP = O-phospho-L-threonyl-[protein] + ADP + H(+). In terms of biological role, regulates both neuronal polarity and synaptic organization when bound to strd-1. Kinase activity is required for the establishment, but not the maintenance, of both processes. Binding to nab-1 is essential for role in restricting axonal fate during neuronal polarization but is not required for regulating synapse morphology. The chain is Serine/threonine kinase SAD-1 from Caenorhabditis elegans.